Here is a 208-residue protein sequence, read N- to C-terminus: MAASLAGKKIVFVTGNAKKLEEVIQILGDKFPCTLVAQKIDLPEYQGEPDEISIRKCQEAARQVQGPVLVEDTCLCFNALGGLPGPYIKWFLEKLKPEGLHQLLEGFQDKSAYALCTFAFSTGDPNEPVRLFRGRTMGRIVVPRGCRDFGWDPCFQPDGYEQTYAEMPKAEKNTISHRFRALLALQEYFSSLTPGVGDDHPSWGSGEG.

Ala2 is modified (N-acetylalanine). Thr14 to Lys19 provides a ligand contact to ITP. Glu44 provides a ligand contact to Mg(2+). Residues Lys56, Asp72–Thr73, Lys89, Phe149–Asp152, Lys172, and His177–Arg178 each bind ITP.

It belongs to the HAM1 NTPase family. Homodimer. The cofactor is Mg(2+). It depends on Mn(2+) as a cofactor.

The protein localises to the cytoplasm. It catalyses the reaction ITP + H2O = IMP + diphosphate + H(+). It carries out the reaction dITP + H2O = dIMP + diphosphate + H(+). The enzyme catalyses XTP + H2O = XMP + diphosphate + H(+). The catalysed reaction is N(6)-hydroxy-dATP + H2O = N(6)-hydroxy-dAMP + diphosphate + H(+). Its function is as follows. Pyrophosphatase that hydrolyzes the non-canonical purine nucleotides inosine triphosphate (ITP), deoxyinosine triphosphate (dITP) as well as 2'-deoxy-N-6-hydroxylaminopurine triphosphate (dHAPTP) and xanthosine 5'-triphosphate (XTP) to their respective monophosphate derivatives. The enzyme does not distinguish between the deoxy- and ribose forms. Probably excludes non-canonical purines from RNA and DNA precursor pools, thus preventing their incorporation into RNA and DNA and avoiding chromosomal lesions. The polypeptide is Inosine triphosphate pyrophosphatase (Bos taurus (Bovine)).